A 144-amino-acid chain; its full sequence is HTH-type transcriptional repressor NsrR (144 aa).

The 128-residue stretch at 2 to 129 (QLTSFTDYGL…DKHTLLSLID (128 aa)) folds into the HTH rrf2-type domain. A DNA-binding region (H-T-H motif) is located at residues 28 to 51 (ISKVTEVYGVSRNHMVKIINKLGQ). [2Fe-2S] cluster is bound by residues C91, C96, and C102.

The cofactor is [2Fe-2S] cluster.

In terms of biological role, nitric oxide-sensitive repressor of genes involved in protecting the cell against nitrosative stress. May require iron for activity. The chain is HTH-type transcriptional repressor NsrR from Photobacterium profundum (strain SS9).